Consider the following 420-residue polypeptide: MASLGADKKHKVTVVGSGNWGSTICKIVAENTKANPDLFEEAVHMWVFEEDVVIDKSSPYYDPAVGDAPQKLTGVINKYHENTKYLPGIKLPDNIIANPSLQDAVKDSTILVFNLPHQFIGNVCKQLRGHIMPFARGISCIKGVNVSDDGISLFSEWIGDGLGIYCGALSGANIASEIAAEKWSETTIAYDPPPMDNSRAPTPRSNSPANGNGIAPLTPVEMQHKDARGRTSKTKLTPVPAEYPPLDHQIFKQLFHRPYFHVRMVSDVAGVSLGGALKNIVALAAGFVDGRGWGDNAKAAIMRVGLLEMVNFGKEFFGQTVHTGTFTEESAGVADLITSCSGGRNFRCAKMAVAEGLSVEEIEKRELNGQLLQGTSTAKEVNSFLKARGLEKDYPLFTAVHGILEGRHSVDDIPSLVSDS.

Residues 16 to 21, phenylalanine 48, and phenylalanine 119 contribute to the NAD(+) site; that span reads GSGNWG. Lysine 142 is a binding site for substrate. Alanine 175 contributes to the NAD(+) binding site. The tract at residues 190 to 217 is disordered; the sequence is YDPPPMDNSRAPTPRSNSPANGNGIAPL. Residues 199 to 210 are compositionally biased toward polar residues; the sequence is RAPTPRSNSPAN. The Proton acceptor role is filled by lysine 278. Arginine 344 and glutamine 373 together coordinate NAD(+). 344–345 provides a ligand contact to substrate; it reads RN.

The protein belongs to the NAD-dependent glycerol-3-phosphate dehydrogenase family.

The enzyme catalyses sn-glycerol 3-phosphate + NAD(+) = dihydroxyacetone phosphate + NADH + H(+). The protein is Glycerol-3-phosphate dehydrogenase [NAD(+)] of Colletotrichum gloeosporioides (Anthracnose fungus).